Here is a 399-residue protein sequence, read N- to C-terminus: Tryptophan synthase beta chain (399 aa).

Position 90 is an N6-(pyridoxal phosphate)lysine (Lys-90).

The protein belongs to the TrpB family. In terms of assembly, tetramer of two alpha and two beta chains. Requires pyridoxal 5'-phosphate as cofactor.

The enzyme catalyses (1S,2R)-1-C-(indol-3-yl)glycerol 3-phosphate + L-serine = D-glyceraldehyde 3-phosphate + L-tryptophan + H2O. The protein operates within amino-acid biosynthesis; L-tryptophan biosynthesis; L-tryptophan from chorismate: step 5/5. The beta subunit is responsible for the synthesis of L-tryptophan from indole and L-serine. This is Tryptophan synthase beta chain from Phocaeicola vulgatus (strain ATCC 8482 / DSM 1447 / JCM 5826 / CCUG 4940 / NBRC 14291 / NCTC 11154) (Bacteroides vulgatus).